Consider the following 428-residue polypeptide: Enolase (428 aa).

Gln-162 is a binding site for (2R)-2-phosphoglycerate. Glu-204 (proton donor) is an active-site residue. Positions 241, 282, and 309 each coordinate Mg(2+). Residues Lys-334, Arg-363, Ser-364, and Lys-385 each contribute to the (2R)-2-phosphoglycerate site. The Proton acceptor role is filled by Lys-334.

This sequence belongs to the enolase family. It depends on Mg(2+) as a cofactor.

The protein resides in the cytoplasm. The protein localises to the secreted. It localises to the cell surface. It carries out the reaction (2R)-2-phosphoglycerate = phosphoenolpyruvate + H2O. The protein operates within carbohydrate degradation; glycolysis; pyruvate from D-glyceraldehyde 3-phosphate: step 4/5. Functionally, catalyzes the reversible conversion of 2-phosphoglycerate (2-PG) into phosphoenolpyruvate (PEP). It is essential for the degradation of carbohydrates via glycolysis. This Mycobacterium marinum (strain ATCC BAA-535 / M) protein is Enolase.